The sequence spans 530 residues: Bifunctional purine biosynthesis protein PurH (530 aa).

The region spanning 1–148 (MEQARPIRRA…KNHKDVAIVV (148 aa)) is the MGS-like domain.

The protein belongs to the PurH family.

The enzyme catalyses (6R)-10-formyltetrahydrofolate + 5-amino-1-(5-phospho-beta-D-ribosyl)imidazole-4-carboxamide = 5-formamido-1-(5-phospho-D-ribosyl)imidazole-4-carboxamide + (6S)-5,6,7,8-tetrahydrofolate. It carries out the reaction IMP + H2O = 5-formamido-1-(5-phospho-D-ribosyl)imidazole-4-carboxamide. It participates in purine metabolism; IMP biosynthesis via de novo pathway; 5-formamido-1-(5-phospho-D-ribosyl)imidazole-4-carboxamide from 5-amino-1-(5-phospho-D-ribosyl)imidazole-4-carboxamide (10-formyl THF route): step 1/1. Its pathway is purine metabolism; IMP biosynthesis via de novo pathway; IMP from 5-formamido-1-(5-phospho-D-ribosyl)imidazole-4-carboxamide: step 1/1. In Aeromonas hydrophila subsp. hydrophila (strain ATCC 7966 / DSM 30187 / BCRC 13018 / CCUG 14551 / JCM 1027 / KCTC 2358 / NCIMB 9240 / NCTC 8049), this protein is Bifunctional purine biosynthesis protein PurH.